The following is a 164-amino-acid chain: Lipoprotein signal peptidase (164 aa).

A run of 4 helical transmembrane segments spans residues 6–26, 39–59, 65–85, and 88–108; these read LGIL…LWLL, VTSF…GWFA, GQIL…IWMA, and TTKL…GNAI. Active-site residues include Asp-118 and Asp-140. The chain crosses the membrane as a helical span at residues 141–161; it reads VAIVVGVVALLYDSLIGAPAV.

The protein belongs to the peptidase A8 family.

Its subcellular location is the cell inner membrane. It carries out the reaction Release of signal peptides from bacterial membrane prolipoproteins. Hydrolyzes -Xaa-Yaa-Zaa-|-(S,diacylglyceryl)Cys-, in which Xaa is hydrophobic (preferably Leu), and Yaa (Ala or Ser) and Zaa (Gly or Ala) have small, neutral side chains.. It functions in the pathway protein modification; lipoprotein biosynthesis (signal peptide cleavage). This protein specifically catalyzes the removal of signal peptides from prolipoproteins. This chain is Lipoprotein signal peptidase, found in Rhodopseudomonas palustris (strain TIE-1).